We begin with the raw amino-acid sequence, 200 residues long: Probable molybdenum cofactor guanylyltransferase (200 aa).

GTP-binding positions include 9 to 11, K21, D69, and D100; that span reads LAG. Residue D100 coordinates Mg(2+).

This sequence belongs to the MobA family. Requires Mg(2+) as cofactor.

The protein resides in the cytoplasm. The catalysed reaction is Mo-molybdopterin + GTP + H(+) = Mo-molybdopterin guanine dinucleotide + diphosphate. In terms of biological role, transfers a GMP moiety from GTP to Mo-molybdopterin (Mo-MPT) cofactor (Moco or molybdenum cofactor) to form Mo-molybdopterin guanine dinucleotide (Mo-MGD) cofactor. The chain is Probable molybdenum cofactor guanylyltransferase from Bacillus cereus (strain G9842).